The chain runs to 467 residues: Phytase A (467 aa).

The first 23 residues, 1-23 (MGVSAVLLPLYLLAGVTSGLAVP), serve as a signal peptide directing secretion. Asn27 carries N-linked (GlcNAc...) asparagine glycosylation. Cys31 and Cys40 form a disulfide bridge. Positions 50 and 51 each coordinate 1D-myo-inositol hexakisphosphate. Asn59 carries an N-linked (GlcNAc...) asparagine glycan. 4 disulfides stabilise this stretch: Cys71/Cys414, Cys215/Cys465, Cys264/Cys282, and Cys436/Cys444. Arg81, His82, Arg85, and Thr88 together coordinate 1D-myo-inositol hexakisphosphate. The active-site Nucleophile is His82. Asn105 and Asn120 each carry an N-linked (GlcNAc...) asparagine glycan. Position 165 (Arg165) interacts with 1D-myo-inositol hexakisphosphate. 2 N-linked (GlcNAc...) asparagine glycosylation sites follow: Asn207 and Asn230. Lys301 contacts 1D-myo-inositol hexakisphosphate. N-linked (GlcNAc...) asparagine glycans are attached at residues Asn339 and Asn352. 1D-myo-inositol hexakisphosphate-binding residues include His361 and Asp362. N-linked (GlcNAc...) asparagine glycans are attached at residues Asn376 and Asn388.

This sequence belongs to the histidine acid phosphatase family. As to quaternary structure, monomer.

The protein localises to the secreted. It catalyses the reaction 1D-myo-inositol hexakisphosphate + H2O = 1D-myo-inositol 1,2,4,5,6-pentakisphosphate + phosphate. The enzyme catalyses 1D-myo-inositol 1,2,4,5,6-pentakisphosphate + H2O = 1D-myo-inositol 1,2,5,6-tetrakisphosphate + phosphate. The catalysed reaction is 1D-myo-inositol 1,2,5,6-tetrakisphosphate + H2O = 1D-myo-inositol 1,2,6-trisphosphate + phosphate. It carries out the reaction 1D-myo-inositol 1,2,6-trisphosphate + H2O = 1D-myo-inositol 1,2-bisphosphate + phosphate. It catalyses the reaction 1D-myo-inositol 1,2-bisphosphate + H2O = 1D-myo-inositol 2-phosphate + phosphate. Functionally, catalyzes the phosphate monoester hydrolysis of phytic acid (myo-inositol hexakisphosphate), which results in the stepwise formation of myo-inositol pentakis-, tetrakis-, tris-, bis-, and monophosphates, as well as the liberation of inorganic phosphate. Myo-inositol 2-monophosphate is the end product. The protein is Phytase A (phyA) of Aspergillus awamori (Black koji mold).